The following is a 260-amino-acid chain: D-threitol dehydrogenase (260 aa).

21 to 50 (LVTGAASGIGAAIASAYATKGARIAAVDLN) is an NAD(+) binding site. Tyrosine 166 functions as the Proton acceptor in the catalytic mechanism. Lysine 170 contacts NAD(+).

This sequence belongs to the short-chain dehydrogenases/reductases (SDR) family.

The catalysed reaction is D-threitol + NAD(+) = D-erythrulose + NADH + H(+). Its pathway is carbohydrate metabolism; D-threitol degradation. Functionally, catalyzes the NAD-dependent reversible oxidation of D-threitol. Involved in the degradation pathway of D-threitol, that allows M.smegmatis to grow on this compound as the sole carbon source. Does not catalyze the oxidation of xylitol, L-sorbitol, and L-sorbose. The sequence is that of D-threitol dehydrogenase from Mycolicibacterium smegmatis (strain ATCC 700084 / mc(2)155) (Mycobacterium smegmatis).